The chain runs to 320 residues: ATP-dependent 6-phosphofructokinase (320 aa).

Residue G12 coordinates ATP. 22–26 lines the ADP pocket; that stretch reads RAVVR. ATP-binding positions include 73-74 and 103-106; these read RF and GDGS. D104 is a Mg(2+) binding site. Residue 126–128 coordinates substrate; that stretch reads TID. D128 functions as the Proton acceptor in the catalytic mechanism. ADP is bound at residue R155. Substrate-binding positions include R163 and 170 to 172; that span reads MGR. ADP-binding positions include 186-188 and 214-216; these read GAE and KNH. Substrate is bound by residues E223, R244, and 250 to 253; that span reads HIQR.

It belongs to the phosphofructokinase type A (PFKA) family. ATP-dependent PFK group I subfamily. Prokaryotic clade 'B1' sub-subfamily. In terms of assembly, homotetramer. Mg(2+) serves as cofactor.

It is found in the cytoplasm. The catalysed reaction is beta-D-fructose 6-phosphate + ATP = beta-D-fructose 1,6-bisphosphate + ADP + H(+). It participates in carbohydrate degradation; glycolysis; D-glyceraldehyde 3-phosphate and glycerone phosphate from D-glucose: step 3/4. Its activity is regulated as follows. Allosterically activated by ADP and other diphosphonucleosides, and allosterically inhibited by phosphoenolpyruvate. Functionally, catalyzes the phosphorylation of D-fructose 6-phosphate to fructose 1,6-bisphosphate by ATP, the first committing step of glycolysis. The polypeptide is ATP-dependent 6-phosphofructokinase (Teredinibacter turnerae (strain ATCC 39867 / T7901)).